The primary structure comprises 943 residues: Calcium-activated chloride channel regulator 2 (943 aa).

An N-terminal signal peptide occupies residues 1-31; the sequence is MTQRSIAGPICNLKFVTLLVALSSELPFLGA. Residues 32-901 are Extracellular-facing; it reads GVQLQDNGYN…SDPVPARDYL (870 aa). The segment at 54 to 205 is metalloprotease domain; sequence NQNLISNIKE…CSSDITGIFV (152 aa). N-linked (GlcNAc...) asparagine glycosylation is found at Asn74 and Asn150. His164 contacts Zn(2+). The active site involves Glu165. Zn(2+)-binding residues include His168 and Asp175. Asn231 carries N-linked (GlcNAc...) asparagine glycosylation. A VWFA domain is found at 311-483; it reads VVCLVLDVSS…NSMIDAFSRI (173 aa). N-linked (GlcNAc...) asparagine glycans are attached at residues Asn522 and Asn822. A helical membrane pass occupies residues 902–922; the sequence is ILKGVLTAMGLIGIICLIIVV. Over 923-943 the chain is Cytoplasmic; the sequence is THHTLSRKKRADKKENGTKLL.

The protein belongs to the CLCR family. In terms of processing, the 141 kDa mature form is autoproteolytically cleaved by the metalloprotease domain, producing a 109 kDa form and a 35 kDa form. The cleavage is necessary for calcium-activated chloride channel (CaCC) activation activity. N-glycosylated. As to expression, expressed in cornea, skin, vagina, esophagus, and larynx (at protein level). Expressed in trachea and mammary gland. Weakly expressed in testis and kidney. Highly expressed in corneal epithelium, colon and trachea. Moderately expressed in brain, urogenital organs, bladder, uterus and prostate. Highly expressed in tissues containing stratified epithelium including cornea, esophagus, larynx, skin and vagina than those tissues which contain only epithelial monolayers. Expressed in normal breast epithelium but not in breast cancer. Highly expressed during epithelial stratification. Expressed in endothelial cells of lung. Expressed selectively in endothelia of small pulmonary arteries, arterioles, and subpleural and interlobular venules.

The protein resides in the cell membrane. It is found in the basal cell membrane. It localises to the cell junction. Its subcellular location is the secreted. Plays a role in modulating chloride current across the plasma membrane in a calcium-dependent manner, and cell adhesion. Involved in basal cell adhesion and/or stratification of squamous epithelia. May act as a tumor suppressor in breast and colorectal cancer. Plays a key role for cell adhesion in the beginning stages of lung metastasis via the binding to ITGB4. The chain is Calcium-activated chloride channel regulator 2 (CLCA2) from Homo sapiens (Human).